We begin with the raw amino-acid sequence, 507 residues long: Microcystinase C (507 aa).

The N-terminal stretch at 1-21 (MLDRRTLMGGILSMAGSKATG) is a signal peptide. Zn(2+)-binding residues include Asp-167, His-169, and His-191.

It belongs to the peptidase M81 family. It depends on Zn(2+) as a cofactor.

Its activity is regulated as follows. Inhibited by the metal chelators EDTA and 1,10-phenanthroline. Its function is as follows. Involved in peptidolytic degradation of cyclic heptapeptide hepatotoxin microcystin (MC). Cleaves both linear MC and the tetrapeptide degradation product of MC. Cleaves the Adda-Glu peptide bond of linear MC heptapeptides. This chain is Microcystinase C, found in Sphingomonas sp.